The sequence spans 816 residues: Leucine--tRNA ligase (816 aa).

The short motif at 40 to 51 (SYPSGAQLHAGH) is the 'HIGH' region element. The 'KMSKS' region motif lies at 576–580 (KMSKS). Lysine 579 contributes to the ATP binding site.

Belongs to the class-I aminoacyl-tRNA synthetase family.

The protein resides in the cytoplasm. The enzyme catalyses tRNA(Leu) + L-leucine + ATP = L-leucyl-tRNA(Leu) + AMP + diphosphate. The protein is Leucine--tRNA ligase of Clostridium beijerinckii (strain ATCC 51743 / NCIMB 8052) (Clostridium acetobutylicum).